The following is a 262-amino-acid chain: Outer membrane protein assembly factor BamD (262 aa).

The N-terminal stretch at 1 to 18 (MRKIKSLALLAVAALVIG) is a signal peptide. The N-palmitoyl cysteine moiety is linked to residue cysteine 19. The S-diacylglycerol cysteine moiety is linked to residue cysteine 19.

Belongs to the BamD family. In terms of assembly, part of the Bam complex.

It localises to the cell outer membrane. Its function is as follows. Part of the outer membrane protein assembly complex, which is involved in assembly and insertion of beta-barrel proteins into the outer membrane. The chain is Outer membrane protein assembly factor BamD from Haemophilus influenzae (strain ATCC 51907 / DSM 11121 / KW20 / Rd).